A 160-amino-acid chain; its full sequence is 3-hydroxyacyl-[acyl-carrier-protein] dehydratase FabZ (160 aa).

Residue His63 is part of the active site.

It belongs to the thioester dehydratase family. FabZ subfamily.

The protein localises to the cytoplasm. It catalyses the reaction a (3R)-hydroxyacyl-[ACP] = a (2E)-enoyl-[ACP] + H2O. Functionally, involved in unsaturated fatty acids biosynthesis. Catalyzes the dehydration of short chain beta-hydroxyacyl-ACPs and long chain saturated and unsaturated beta-hydroxyacyl-ACPs. This chain is 3-hydroxyacyl-[acyl-carrier-protein] dehydratase FabZ, found in Xylella fastidiosa (strain M12).